The sequence spans 121 residues: MGIEEFGGGQAAQADVLVVTTNDVPGYQVTQVIGEVFGLTVRSRHLGSQIGAGLKSMIGGELKGLTKTLVETRNQAMERLVEQARARGANAVLMMRFDVTEAADVGTEVCAYGTAAVISKV.

It belongs to the UPF0145 family.

The sequence is that of UPF0145 protein SGR_4080 from Streptomyces griseus subsp. griseus (strain JCM 4626 / CBS 651.72 / NBRC 13350 / KCC S-0626 / ISP 5235).